The sequence spans 206 residues: Max dimerization protein 3 (206 aa).

Residues 8-25 (IQVLLQAAEFLERREREA) are interaction with SIN3A and SIN3B. In terms of domain architecture, bHLH spans 57-109 (SGRHVHNELEKRRRAQLKRCLEQLRQQMPLGVDHTRYTTLSLLRGARMHIQKL).

As to quaternary structure, efficient DNA binding requires dimerization with another bHLH protein. Binds DNA as a heterodimer with MAX. Interacts with SIN3A AND SIN3B. Interacts with RNF17.

The protein localises to the nucleus. Its function is as follows. Transcriptional repressor. Binds with MAX to form a sequence-specific DNA-binding protein complex which recognizes the core sequence 5'-CAC[GA]TG-3'. Antagonizes MYC transcriptional activity by competing for MAX and suppresses MYC dependent cell transformation. The chain is Max dimerization protein 3 (Mxd3) from Rattus norvegicus (Rat).